A 176-amino-acid polypeptide reads, in one-letter code: NAD(P)H-quinone oxidoreductase subunit 6, chloroplastic (176 aa).

Helical transmembrane passes span 10-30 (FLLV…VLLP), 32-52 (PIFS…LYIL), 61-81 (AQLL…VMFM), 92-112 (LWTV…FSLM), and 152-172 (FFLP…GAIS).

The protein belongs to the complex I subunit 6 family. In terms of assembly, NDH is composed of at least 16 different subunits, 5 of which are encoded in the nucleus.

The protein resides in the plastid. It is found in the chloroplast thylakoid membrane. The catalysed reaction is a plastoquinone + NADH + (n+1) H(+)(in) = a plastoquinol + NAD(+) + n H(+)(out). It catalyses the reaction a plastoquinone + NADPH + (n+1) H(+)(in) = a plastoquinol + NADP(+) + n H(+)(out). In terms of biological role, NDH shuttles electrons from NAD(P)H:plastoquinone, via FMN and iron-sulfur (Fe-S) centers, to quinones in the photosynthetic chain and possibly in a chloroplast respiratory chain. The immediate electron acceptor for the enzyme in this species is believed to be plastoquinone. Couples the redox reaction to proton translocation, and thus conserves the redox energy in a proton gradient. The protein is NAD(P)H-quinone oxidoreductase subunit 6, chloroplastic (ndhG) of Barbarea verna (Land cress).